The sequence spans 296 residues: Acetylglutamate kinase (296 aa).

Substrate-binding positions include 66–67 (GG), Arg88, and Asn191.

This sequence belongs to the acetylglutamate kinase family. ArgB subfamily.

It localises to the cytoplasm. The catalysed reaction is N-acetyl-L-glutamate + ATP = N-acetyl-L-glutamyl 5-phosphate + ADP. It participates in amino-acid biosynthesis; L-arginine biosynthesis; N(2)-acetyl-L-ornithine from L-glutamate: step 2/4. Catalyzes the ATP-dependent phosphorylation of N-acetyl-L-glutamate. The polypeptide is Acetylglutamate kinase (Lawsonia intracellularis (strain PHE/MN1-00)).